The primary structure comprises 130 residues: Small ribosomal subunit protein uS8 (130 aa).

Belongs to the universal ribosomal protein uS8 family. In terms of assembly, part of the 30S ribosomal subunit. Contacts proteins S5 and S12.

One of the primary rRNA binding proteins, it binds directly to 16S rRNA central domain where it helps coordinate assembly of the platform of the 30S subunit. In Pseudoalteromonas translucida (strain TAC 125), this protein is Small ribosomal subunit protein uS8.